A 136-amino-acid polypeptide reads, in one-letter code: Probable 5-hydroxyisourate hydrolase ZK697.8 (136 aa).

An N-terminal signal peptide occupies residues 1–19 (MIKFLLFLAIAAATVISNA). Residues H31, R69, and Y133 each contribute to the substrate site.

The protein belongs to the transthyretin family. 5-hydroxyisourate hydrolase subfamily. Homotetramer.

It catalyses the reaction 5-hydroxyisourate + H2O = 5-hydroxy-2-oxo-4-ureido-2,5-dihydro-1H-imidazole-5-carboxylate + H(+). Catalyzes the hydrolysis of 5-hydroxyisourate (HIU) to 2-oxo-4-hydroxy-4-carboxy-5-ureidoimidazoline (OHCU). The polypeptide is Probable 5-hydroxyisourate hydrolase ZK697.8 (Caenorhabditis elegans).